Here is a 258-residue protein sequence, read N- to C-terminus: NAD-dependent protein deacylase (258 aa).

The Deacetylase sirtuin-type domain occupies 3–258; that stretch reads ERQLEKSIEH…LPALMRGLSA (256 aa). 28–48 lines the NAD(+) pocket; the sequence is GAGMSADSGLETYRDDKTGLW. Residues tyrosine 73 and arginine 76 each contribute to the substrate site. Residue 109–112 coordinates NAD(+); the sequence is QNID. Histidine 127 functions as the Proton acceptor in the catalytic mechanism. Cysteine 135, cysteine 138, cysteine 161, and cysteine 164 together coordinate Zn(2+). Residues 201 to 203 and alanine 245 contribute to the NAD(+) site; that span reads GTS.

It belongs to the sirtuin family. Class III subfamily. It depends on Zn(2+) as a cofactor.

The protein resides in the cytoplasm. It carries out the reaction N(6)-acetyl-L-lysyl-[protein] + NAD(+) + H2O = 2''-O-acetyl-ADP-D-ribose + nicotinamide + L-lysyl-[protein]. The enzyme catalyses N(6)-succinyl-L-lysyl-[protein] + NAD(+) + H2O = 2''-O-succinyl-ADP-D-ribose + nicotinamide + L-lysyl-[protein]. Functionally, NAD-dependent lysine deacetylase and desuccinylase that specifically removes acetyl and succinyl groups on target proteins. Modulates the activities of several proteins which are inactive in their acylated form. The polypeptide is NAD-dependent protein deacylase (Corynebacterium glutamicum (strain ATCC 13032 / DSM 20300 / JCM 1318 / BCRC 11384 / CCUG 27702 / LMG 3730 / NBRC 12168 / NCIMB 10025 / NRRL B-2784 / 534)).